The following is a 193-amino-acid chain: Xanthine phosphoribosyltransferase (193 aa).

Leu-20 and Asn-27 together coordinate xanthine. 129–133 (ANGKA) is a 5-phospho-alpha-D-ribose 1-diphosphate binding site. Lys-157 contributes to the xanthine binding site.

It belongs to the purine/pyrimidine phosphoribosyltransferase family. Xpt subfamily. As to quaternary structure, homodimer.

The protein resides in the cytoplasm. The catalysed reaction is XMP + diphosphate = xanthine + 5-phospho-alpha-D-ribose 1-diphosphate. Its pathway is purine metabolism; XMP biosynthesis via salvage pathway; XMP from xanthine: step 1/1. Converts the preformed base xanthine, a product of nucleic acid breakdown, to xanthosine 5'-monophosphate (XMP), so it can be reused for RNA or DNA synthesis. The sequence is that of Xanthine phosphoribosyltransferase from Bifidobacterium adolescentis (strain ATCC 15703 / DSM 20083 / NCTC 11814 / E194a).